The sequence spans 151 residues: Succinate dehydrogenase subunit 4, mitochondrial (151 aa).

A mitochondrion-targeting transit peptide spans 1 to 78 (MSLRRTILDL…RSISSSIGQS (78 aa)). His109 contributes to the heme binding site. Tyr121 contacts a ubiquinone. Residues 130–150 (LIVMSLGLFQIIVLKDIILFL) form a helical membrane-spanning segment.

As to quaternary structure, component of complex II composed of eight subunits in plants: four classical SDH subunits SDH1, SDH2, SDH3 and SDH4 (a flavoprotein (FP), an iron-sulfur protein (IP), and a cytochrome b composed of a large and a small subunit.), as well as four subunits unknown in mitochondria from bacteria and heterotrophic eukaryotes. The cofactor is heme. Expressed in flowers, inflorescences and stems.

It localises to the mitochondrion inner membrane. It functions in the pathway carbohydrate metabolism; tricarboxylic acid cycle. Membrane-anchoring subunit of succinate dehydrogenase (SDH). This chain is Succinate dehydrogenase subunit 4, mitochondrial, found in Arabidopsis thaliana (Mouse-ear cress).